The chain runs to 293 residues: NAD-dependent protein deacetylase (293 aa).

The region spanning 5–282 (PAHDHHTLQD…LHAPPHLPRA (278 aa)) is the Deacetylase sirtuin-type domain. NAD(+) contacts are provided by residues 27-47 (GAGC…GGWK) and 105-108 (QNVD). Catalysis depends on histidine 123, which acts as the Proton acceptor. Positions 131, 134, 182, and 185 each coordinate Zn(2+). NAD(+) contacts are provided by residues 222–224 (GSS), 248–250 (NFG), and cysteine 266.

This sequence belongs to the sirtuin family. Class II subfamily. Zn(2+) is required as a cofactor.

It is found in the cytoplasm. The catalysed reaction is N(6)-acetyl-L-lysyl-[protein] + NAD(+) + H2O = 2''-O-acetyl-ADP-D-ribose + nicotinamide + L-lysyl-[protein]. In terms of biological role, NAD-dependent protein deacetylase which modulates the activities of several enzymes which are inactive in their acetylated form. The polypeptide is NAD-dependent protein deacetylase (Xanthomonas axonopodis pv. citri (strain 306)).